We begin with the raw amino-acid sequence, 554 residues long: Kinesin-like protein 3 (554 aa).

One can recognise a Kinesin motor domain in the interval 3 to 325; sequence SIKVVCRIRP…LRFGHRAKSI (323 aa). ATP contacts are provided by residues 84–91 and 233–240; these read GQTGSGKT and GSESVGKS. The stretch at 446–473 forms a coiled coil; that stretch reads LSSTKQQLSDLMTALGDAQERYVELVKN.

It belongs to the TRAFAC class myosin-kinesin ATPase superfamily. Kinesin family.

The protein localises to the cytoplasm. Its subcellular location is the cytoskeleton. Cytoplasmic motor that could play a role in Golgi membrane recycling. The polypeptide is Kinesin-like protein 3 (klp3) (Schizosaccharomyces pombe (strain 972 / ATCC 24843) (Fission yeast)).